A 415-amino-acid chain; its full sequence is Probable carboxypeptidase ACLA_013260 (415 aa).

An N-terminal signal peptide occupies residues 1–17 (MKFPWLLLVKGAASVAA). N97 is a glycosylation site (N-linked (GlcNAc...) asparagine). Position 145 (D145) interacts with Zn(2+). The active-site Proton acceptor is the E177. E178 contributes to the Zn(2+) binding site. N271 carries N-linked (GlcNAc...) asparagine glycosylation.

It belongs to the peptidase M20A family. Requires Zn(2+) as cofactor.

It localises to the secreted. This Aspergillus clavatus (strain ATCC 1007 / CBS 513.65 / DSM 816 / NCTC 3887 / NRRL 1 / QM 1276 / 107) protein is Probable carboxypeptidase ACLA_013260.